We begin with the raw amino-acid sequence, 344 residues long: tRNA N6-adenosine threonylcarbamoyltransferase (344 aa).

Residues histidine 112 and histidine 116 each coordinate Fe cation. Substrate contacts are provided by residues 135–139, aspartate 168, glycine 181, and asparagine 271; that span reads LVSGG. Aspartate 299 lines the Fe cation pocket.

It belongs to the KAE1 / TsaD family. Requires Fe(2+) as cofactor.

It is found in the cytoplasm. The catalysed reaction is L-threonylcarbamoyladenylate + adenosine(37) in tRNA = N(6)-L-threonylcarbamoyladenosine(37) in tRNA + AMP + H(+). In terms of biological role, required for the formation of a threonylcarbamoyl group on adenosine at position 37 (t(6)A37) in tRNAs that read codons beginning with adenine. Is involved in the transfer of the threonylcarbamoyl moiety of threonylcarbamoyl-AMP (TC-AMP) to the N6 group of A37, together with TsaE and TsaB. TsaD likely plays a direct catalytic role in this reaction. The sequence is that of tRNA N6-adenosine threonylcarbamoyltransferase from Sphingopyxis alaskensis (strain DSM 13593 / LMG 18877 / RB2256) (Sphingomonas alaskensis).